We begin with the raw amino-acid sequence, 314 residues long: Epithelial cell adhesion molecule (314 aa).

A signal peptide spans 1 to 23 (MAPPQVLAFGLLLAAATATFAAA). Residues 24–265 (QEECVCENYK…APEFSMQGLK (242 aa)) lie on the Extracellular side of the membrane. Cystine bridges form between C27/C46, C29/C59, C38/C48, C66/C99, C110/C116, and C118/C135. One can recognise a Thyroglobulin type-1 domain in the interval 63–135 (AAKCLVMKAE…RTDKDTEITC (73 aa)). N-linked (GlcNAc...) asparagine; partial glycosylation is present at N74. N-linked (GlcNAc...) asparagine glycosylation occurs at N111. N-linked (GlcNAc...) asparagine glycosylation occurs at N198. Residues 266–288 (AGVIAVIVVVVIAVVAGIVVLVI) form a helical membrane-spanning segment. Topologically, residues 289–314 (SRKKRMAKYEKAEIKEMGEMHRELNA) are cytoplasmic.

It belongs to the EPCAM family. As to quaternary structure, monomer. Interacts with phosphorylated CLDN7. In terms of processing, hyperglycosylated in carcinoma tissue as compared with autologous normal epithelia. Glycosylation at Asn-198 is crucial for protein stability. As to expression, highly and selectively expressed by undifferentiated rather than differentiated embryonic stem cells (ESC). Levels rapidly diminish as soon as ESC's differentiate (at protein levels). Expressed in almost all epithelial cell membranes but not on mesodermal or neural cell membranes. Found on the surface of adenocarcinoma.

The protein resides in the lateral cell membrane. It localises to the cell junction. Its subcellular location is the tight junction. In terms of biological role, may act as a physical homophilic interaction molecule between intestinal epithelial cells (IECs) and intraepithelial lymphocytes (IELs) at the mucosal epithelium for providing immunological barrier as a first line of defense against mucosal infection. Plays a role in embryonic stem cells proliferation and differentiation. Up-regulates the expression of FABP5, MYC and cyclins A and E. This chain is Epithelial cell adhesion molecule (EPCAM), found in Homo sapiens (Human).